Reading from the N-terminus, the 475-residue chain is Ribulose bisphosphate carboxylase large chain (475 aa).

Residues 1–2 (MS) constitute a propeptide that is removed on maturation. Pro3 bears the N-acetylproline mark. Lys14 bears the N6,N6,N6-trimethyllysine mark. Substrate contacts are provided by Asn123 and Thr173. Lys175 serves as the catalytic Proton acceptor. Residue Lys177 participates in substrate binding. The Mg(2+) site is built by Lys201, Asp203, and Glu204. Lys201 bears the N6-carboxylysine mark. The Proton acceptor role is filled by His294. Substrate-binding residues include Arg295, His327, and Ser379.

Belongs to the RuBisCO large chain family. Type I subfamily. Heterohexadecamer of 8 large chains and 8 small chains; disulfide-linked. The disulfide link is formed within the large subunit homodimers. Mg(2+) serves as cofactor. The disulfide bond which can form in the large chain dimeric partners within the hexadecamer appears to be associated with oxidative stress and protein turnover.

It is found in the plastid. The protein localises to the chloroplast. It catalyses the reaction 2 (2R)-3-phosphoglycerate + 2 H(+) = D-ribulose 1,5-bisphosphate + CO2 + H2O. The enzyme catalyses D-ribulose 1,5-bisphosphate + O2 = 2-phosphoglycolate + (2R)-3-phosphoglycerate + 2 H(+). In terms of biological role, ruBisCO catalyzes two reactions: the carboxylation of D-ribulose 1,5-bisphosphate, the primary event in carbon dioxide fixation, as well as the oxidative fragmentation of the pentose substrate in the photorespiration process. Both reactions occur simultaneously and in competition at the same active site. In Clarkia xantiana (Gunsight clarkia), this protein is Ribulose bisphosphate carboxylase large chain.